A 170-amino-acid chain; its full sequence is MDTRNKAQLLVLLTLLSVLFSQTSAWPLYRAPSALRLGDRIPFEGANEPDQVSLKEDIDMLQNALAENDTPYYDVSRNARHADGVFTSDFSKLLGQLSAKKYLESLMGKRVSSNISEDPVPVKRHSDAVFTDNYTRLRKQMAVKKYLNSILNGKRSSEGESPDFPEELEK.

A signal peptide spans 1 to 20; it reads MDTRNKAQLLVLLTLLSVLF. The propeptide occupies 21-79; the sequence is SQTSAWPLYRAPSALRLGDRIPFEGANEPDQVSLKEDIDMLQNALAENDTPYYDVSRNA. S76 carries the post-translational modification Phosphoserine. M107 bears the Methionine amide mark. N152 carries the asparagine amide modification. A propeptide spanning residues 156-170 is cleaved from the precursor; the sequence is SSEGESPDFPEELEK.

The protein belongs to the glucagon family.

It localises to the secreted. Its function is as follows. VIP is a neuropeptide involved in a diverse array of physiological processes through activating the PACAP subfamily of class B1 G protein-coupled receptors: VIP receptor 1 (VPR1) and VIP receptor 2 (VPR2). Abundantly expressed throughout the CNS and peripheral nervous systems where they primarily exert neuroprotective and immune modulatory roles. Also causes vasodilation, lowers arterial blood pressure, stimulates myocardial contractility, increases glycogenolysis and relaxes the smooth muscle of trachea, stomach and gall bladder. In terms of biological role, PHM-27 and PHV-42 are two bioactive forms from proteolysis of the same precursor protein, that cause vasodilation. PHM-27 is a potent agonist of the calcitonin receptor CALCR, with similar efficacy as calcitonin. The protein is VIP peptides of Homo sapiens (Human).